The chain runs to 554 residues: Glucose-6-phosphate isomerase (554 aa).

Glu359 (proton donor) is an active-site residue. Catalysis depends on residues His390 and Lys518.

This sequence belongs to the GPI family.

It localises to the cytoplasm. It catalyses the reaction alpha-D-glucose 6-phosphate = beta-D-fructose 6-phosphate. It functions in the pathway carbohydrate biosynthesis; gluconeogenesis. The protein operates within carbohydrate degradation; glycolysis; D-glyceraldehyde 3-phosphate and glycerone phosphate from D-glucose: step 2/4. Functionally, catalyzes the reversible isomerization of glucose-6-phosphate to fructose-6-phosphate. This chain is Glucose-6-phosphate isomerase, found in Pseudomonas putida (strain ATCC 700007 / DSM 6899 / JCM 31910 / BCRC 17059 / LMG 24140 / F1).